The primary structure comprises 955 residues: B3 domain-containing protein Os07g0563300 (955 aa).

Composition is skewed to pro residues over residues 1–20 (MSSP…PPPS) and 29–45 (VQPP…PQQP). Disordered regions lie at residues 1 to 81 (MSSP…QRPR) and 325 to 392 (ARKG…SSSL). Residues 62 to 71 (QHQQQQQGPP) are compositionally biased toward low complexity. Positions 332–342 (DPCSSVSTTFK) are enriched in polar residues. Basic and acidic residues predominate over residues 343–355 (LDSHHPSILKDDP). Over residues 382–392 (QQQQQMASSSL) the composition is skewed to low complexity. The segment at residues 453–554 (FEKMLSASDA…KLVMGFRKAT (102 aa)) is a DNA-binding region (TF-B3). Polar residues-rich tracts occupy residues 556–565 (LSAEQDQPTK) and 598–608 (NTESKSSSPVE). The interval 556–642 (LSAEQDQPTK…PLPVKRKATS (87 aa)) is disordered. Residues 708–758 (SGENHQWAQCEDCSKWRKLPVDALLPSKWTCSDNKWDSERSSCDSAQEINM) form a CW-type zinc finger. The Zn(2+) site is built by Cys-717, Cys-720, Cys-738, and Cys-750. The disordered stretch occupies residues 856–955 (MMRREKRQQS…ATRLLRDNPT (100 aa)). Basic and acidic residues predominate over residues 862 to 877 (RQQSEKDSGVPRKREP). Polar residues-rich tracts occupy residues 878-900 (GQSS…SSPH) and 920-933 (TSSP…LNSQ). Over residues 939–955 (EQSPKSDATRLLRDNPT) the composition is skewed to basic and acidic residues.

The protein resides in the nucleus. The chain is B3 domain-containing protein Os07g0563300 from Oryza sativa subsp. japonica (Rice).